Consider the following 133-residue polypeptide: UPF0225 protein BB3385 (133 aa).

It belongs to the UPF0225 family.

This chain is UPF0225 protein BB3385, found in Bordetella bronchiseptica (strain ATCC BAA-588 / NCTC 13252 / RB50) (Alcaligenes bronchisepticus).